The primary structure comprises 656 residues: Translation factor GUF1 homolog, mitochondrial (656 aa).

Residues Met1 to Phe29 constitute a mitochondrion transit peptide. The tr-type G domain maps to Glu54 to Val238. GTP-binding positions include Ala63–Ser70, Asp131–His135, and Thr185–Asp188.

It belongs to the TRAFAC class translation factor GTPase superfamily. Classic translation factor GTPase family. LepA subfamily.

It is found in the mitochondrion inner membrane. The catalysed reaction is GTP + H2O = GDP + phosphate + H(+). In terms of biological role, promotes mitochondrial protein synthesis. May act as a fidelity factor of the translation reaction, by catalyzing a one-codon backward translocation of tRNAs on improperly translocated ribosomes. Binds to mitochondrial ribosomes in a GTP-dependent manner. The protein is Translation factor GUF1 homolog, mitochondrial of Phytophthora infestans (strain T30-4) (Potato late blight agent).